We begin with the raw amino-acid sequence, 202 residues long: Na(+)-translocating NADH-quinone reductase subunit E (202 aa).

6 helical membrane-spanning segments follow: residues 11-31 (SVFI…FLAM), 35-55 (INAA…TVPA), 81-101 (FLSF…MEMV), 114-134 (GVFL…LFMV), 144-164 (VVYG…LAGI), and 180-200 (LGIT…FGGI).

The protein belongs to the NqrDE/RnfAE family. Composed of six subunits; NqrA, NqrB, NqrC, NqrD, NqrE and NqrF.

The protein localises to the cell inner membrane. It catalyses the reaction a ubiquinone + n Na(+)(in) + NADH + H(+) = a ubiquinol + n Na(+)(out) + NAD(+). NQR complex catalyzes the reduction of ubiquinone-1 to ubiquinol by two successive reactions, coupled with the transport of Na(+) ions from the cytoplasm to the periplasm. NqrA to NqrE are probably involved in the second step, the conversion of ubisemiquinone to ubiquinol. This Cellvibrio japonicus (strain Ueda107) (Pseudomonas fluorescens subsp. cellulosa) protein is Na(+)-translocating NADH-quinone reductase subunit E.